A 318-amino-acid polypeptide reads, in one-letter code: dTDP-6-deoxy-L-talose 4-dehydrogenase (NAD(P)(+)) (318 aa).

NAD(+)-binding positions include 19–20, 60–61, N95, T120, Y145, and K149; these read FI and DP. Positions 120 and 145 each coordinate substrate. Y145 (proton acceptor) is an active-site residue.

It belongs to the NAD(P)-dependent epimerase/dehydratase family.

It catalyses the reaction dTDP-6-deoxy-beta-L-talose + NAD(+) = dTDP-4-dehydro-beta-L-rhamnose + NADH + H(+). It carries out the reaction dTDP-6-deoxy-beta-L-talose + NADP(+) = dTDP-4-dehydro-beta-L-rhamnose + NADPH + H(+). Its function is as follows. Catalyzes the reduction of dTDP-6-deoxy-L-lyxo-4-hexulose to dTDP-6-deoxy-L-talose. Can use NAD(+) or NADP(+). The protein is dTDP-6-deoxy-L-talose 4-dehydrogenase (NAD(P)(+)) (tal) of Kitasatospora kifunensis (Streptomyces kifunensis).